Here is a 56-residue protein sequence, read N- to C-terminus: Protein hunchback (56 aa).

C2H2-type zinc fingers lie at residues 1–5, 11–33, and 39–56; these read HVRNH, HKCG…MKSH, and YRCA…SLKL.

Belongs to the hunchback C2H2-type zinc-finger protein family.

The protein localises to the nucleus. In terms of biological role, gap class segmentation protein that controls development of head structures. This is Protein hunchback (hb) from Bithynia tentaculata (Spire snail).